A 283-amino-acid polypeptide reads, in one-letter code: NAD kinase (283 aa).

The Proton acceptor role is filled by aspartate 67. Residues 67-68 (DG), arginine 72, 136-137 (NE), lysine 147, arginine 164, aspartate 166, 177-182 (TAYSMS), and glutamine 236 contribute to the NAD(+) site.

Belongs to the NAD kinase family. It depends on a divalent metal cation as a cofactor.

It is found in the cytoplasm. It carries out the reaction NAD(+) + ATP = ADP + NADP(+) + H(+). Involved in the regulation of the intracellular balance of NAD and NADP, and is a key enzyme in the biosynthesis of NADP. Catalyzes specifically the phosphorylation on 2'-hydroxyl of the adenosine moiety of NAD to yield NADP. In Methanothermobacter thermautotrophicus (strain ATCC 29096 / DSM 1053 / JCM 10044 / NBRC 100330 / Delta H) (Methanobacterium thermoautotrophicum), this protein is NAD kinase.